The chain runs to 601 residues: Putative purine permease C1399.01c (601 aa).

A run of 12 helical transmembrane segments spans residues 64-84, 102-122, 131-151, 179-199, 207-227, 264-284, 294-314, 337-357, 424-444, 450-470, 481-501, and 522-542; these read VPVLLALLLGFQHALAMVGGV, TNYLVSAGLISSGIMTLIQIA, YYIGTGMLSVLGISFTSVSVA, YGAFLATACVCSLLEIFMSFI, LFPPIVTGPVVLLIGTSLISS, GWGSAQFIGLGFSVFATIIII, TTSVVLGLVVGMIISAATGYW, IYGPAVLPMLALYIVNMMEAI, FFCAVILFFMGLFAKFAAVFV, VLGGMTTFLFSSVAVSGIAII, FILTASMTLGMGAILVPDWFT, and LVMENGFAIGAFISIFLNLIL.

It belongs to the nucleobase:cation symporter-2 (NCS2) (TC 2.A.40) family.

The protein localises to the vacuole membrane. The chain is Putative purine permease C1399.01c from Schizosaccharomyces pombe (strain 972 / ATCC 24843) (Fission yeast).